Reading from the N-terminus, the 258-residue chain is tRNA pseudouridine synthase A (258 aa).

The active-site Nucleophile is D53. Substrate is bound at residue Y111.

Belongs to the tRNA pseudouridine synthase TruA family. In terms of assembly, homodimer.

The enzyme catalyses uridine(38/39/40) in tRNA = pseudouridine(38/39/40) in tRNA. Functionally, formation of pseudouridine at positions 38, 39 and 40 in the anticodon stem and loop of transfer RNAs. The chain is tRNA pseudouridine synthase A from Streptococcus agalactiae serotype Ia (strain ATCC 27591 / A909 / CDC SS700).